Reading from the N-terminus, the 580-residue chain is Proline--tRNA ligase (580 aa).

The protein belongs to the class-II aminoacyl-tRNA synthetase family. ProS type 1 subfamily. In terms of assembly, homodimer.

Its subcellular location is the cytoplasm. It carries out the reaction tRNA(Pro) + L-proline + ATP = L-prolyl-tRNA(Pro) + AMP + diphosphate. Functionally, catalyzes the attachment of proline to tRNA(Pro) in a two-step reaction: proline is first activated by ATP to form Pro-AMP and then transferred to the acceptor end of tRNA(Pro). As ProRS can inadvertently accommodate and process non-cognate amino acids such as alanine and cysteine, to avoid such errors it has two additional distinct editing activities against alanine. One activity is designated as 'pretransfer' editing and involves the tRNA(Pro)-independent hydrolysis of activated Ala-AMP. The other activity is designated 'posttransfer' editing and involves deacylation of mischarged Ala-tRNA(Pro). The misacylated Cys-tRNA(Pro) is not edited by ProRS. The chain is Proline--tRNA ligase from Polynucleobacter necessarius subsp. necessarius (strain STIR1).